The primary structure comprises 400 residues: Glutamyl-tRNA reductase (400 aa).

Residues 45–48, serine 103, 108–110, and glutamine 114 contribute to the substrate site; these read TCNR and EDQ. The active-site Nucleophile is the cysteine 46. An NADP(+)-binding site is contributed by 179–184; it reads GYGEIG.

The protein belongs to the glutamyl-tRNA reductase family. In terms of assembly, homodimer.

It carries out the reaction (S)-4-amino-5-oxopentanoate + tRNA(Glu) + NADP(+) = L-glutamyl-tRNA(Glu) + NADPH + H(+). It participates in porphyrin-containing compound metabolism; protoporphyrin-IX biosynthesis; 5-aminolevulinate from L-glutamyl-tRNA(Glu): step 1/2. Functionally, catalyzes the NADPH-dependent reduction of glutamyl-tRNA(Glu) to glutamate 1-semialdehyde (GSA). This Clostridium perfringens (strain ATCC 13124 / DSM 756 / JCM 1290 / NCIMB 6125 / NCTC 8237 / Type A) protein is Glutamyl-tRNA reductase.